A 188-amino-acid chain; its full sequence is Inosine triphosphate pyrophosphatase (188 aa).

Residue 9–14 (TGNAKK) participates in ITP binding. Glutamate 39 is a Mg(2+) binding site. Residues lysine 51, 67 to 68 (DT), lysine 84, 143 to 146 (FGWD), lysine 166, and 171 to 172 (HR) contribute to the ITP site.

It belongs to the HAM1 NTPase family. As to quaternary structure, homodimer. Mg(2+) serves as cofactor. Requires Mn(2+) as cofactor.

It localises to the cytoplasm. The enzyme catalyses ITP + H2O = IMP + diphosphate + H(+). The catalysed reaction is dITP + H2O = dIMP + diphosphate + H(+). It catalyses the reaction XTP + H2O = XMP + diphosphate + H(+). Its function is as follows. Pyrophosphatase that hydrolyzes non-canonical purine nucleotides such as inosine triphosphate (ITP), deoxyinosine triphosphate (dITP) or xanthosine 5'-triphosphate (XTP) to their respective monophosphate derivatives. The enzyme does not distinguish between the deoxy- and ribose forms. Probably excludes non-canonical purines from RNA and DNA precursor pools, thus preventing their incorporation into RNA and DNA and avoiding chromosomal lesions. The sequence is that of Inosine triphosphate pyrophosphatase from Aedes aegypti (Yellowfever mosquito).